Reading from the N-terminus, the 316-residue chain is Ornithine carbamoyltransferase (316 aa).

Residues 57–60, glutamine 84, arginine 108, and 135–138 each bind carbamoyl phosphate; these read STRT and HPCQ. L-ornithine is bound by residues asparagine 166, aspartate 230, and 234–235; that span reads SM. Carbamoyl phosphate contacts are provided by residues 269–270 and arginine 297; that span reads CL.

It belongs to the aspartate/ornithine carbamoyltransferase superfamily. OTCase family.

Its subcellular location is the cytoplasm. It catalyses the reaction carbamoyl phosphate + L-ornithine = L-citrulline + phosphate + H(+). The protein operates within amino-acid degradation; L-arginine degradation via ADI pathway; carbamoyl phosphate from L-arginine: step 2/2. Its function is as follows. Reversibly catalyzes the transfer of the carbamoyl group from carbamoyl phosphate (CP) to the N(epsilon) atom of ornithine (ORN) to produce L-citrulline. In Bacillus cereus (strain AH187), this protein is Ornithine carbamoyltransferase.